Reading from the N-terminus, the 166-residue chain is Small ribosomal subunit protein uS9 (166 aa).

The disordered stretch occupies residues 135–166; sequence KKAGFLTRDPRATERKKYGLKKARKAPQYSKR. Residues 142–151 are compositionally biased toward basic and acidic residues; the sequence is RDPRATERKK. The segment covering 152 to 166 has biased composition (basic residues); that stretch reads YGLKKARKAPQYSKR.

It belongs to the universal ribosomal protein uS9 family.

The chain is Small ribosomal subunit protein uS9 from Mycolicibacterium paratuberculosis (strain ATCC BAA-968 / K-10) (Mycobacterium paratuberculosis).